Here is a 736-residue protein sequence, read N- to C-terminus: Nucleoporin nup60 (736 aa).

The segment at 1 to 46 (MSSGPIRTLHKGKAARNRTPYDRIAASKDGNHSNGPQTPSKSIFQR) is disordered. Residues 19-31 (TPYDRIAASKDGN) show a composition bias toward basic and acidic residues. Positions 32–43 (HSNGPQTPSKSI) are enriched in polar residues. 4 positions are modified to phosphoserine: serine 157, serine 159, serine 161, and serine 162. Disordered regions lie at residues 178-210 (RAAA…NSAK), 295-321 (DTSF…KTPS), 338-519 (TPSI…PNET), 565-614 (AVTD…RSLF), and 647-701 (EQAE…FPKF). Polar residues-rich tracts occupy residues 196–210 (RTSS…NSAK) and 295–314 (DTSF…TTAN). Residues 375 to 397 (QIRPSSEKSEPEKKEPSAFETLE) are compositionally biased toward basic and acidic residues. A compositionally biased stretch (polar residues) spans 456-473 (SATTDKPSPPVSSIFSFN). Composition is skewed to low complexity over residues 474–505 (APSA…TSFS) and 573–587 (EVSS…TMIS). Polar residues predominate over residues 588–597 (QPNTGFSFGS). Residues 664–692 (EVEKPSAEGTNEHKQDATMTLEKTDKQGS) show a composition bias toward basic and acidic residues.

In terms of assembly, component of the nuclear pore complex (NPC). NPC constitutes the exclusive means of nucleocytoplasmic transport. NPCs allow the passive diffusion of ions and small molecules and the active, nuclear transport receptor-mediated bidirectional transport of macromolecules such as proteins, RNAs, ribonucleoparticles (RNPs), and ribosomal subunits across the nuclear envelope.

The protein localises to the nucleus. It localises to the nuclear pore complex. Its subcellular location is the nucleus membrane. Functions as a component of the nuclear pore complex (NPC). NPC components, collectively referred to as nucleoporins (NUPs), can play the role of both NPC structural components and of docking or interaction partners for transiently associated nuclear transport factors. Active directional transport is assured by both, a Phe-Gly (FG) repeat affinity gradient for these transport factors across the NPC and a transport cofactor concentration gradient across the nuclear envelope. In Schizosaccharomyces pombe (strain 972 / ATCC 24843) (Fission yeast), this protein is Nucleoporin nup60 (nup60).